The sequence spans 161 residues: Phosphopantetheine adenylyltransferase (161 aa).

A substrate-binding site is contributed by S9. ATP is bound by residues 9-10 (SF) and H17. Residues K41, L73, and K87 each coordinate substrate. ATP contacts are provided by residues 88-90 (GLR), E98, and 122-128 (FSFLSSS).

It belongs to the bacterial CoaD family. As to quaternary structure, homohexamer. Requires Mg(2+) as cofactor.

The protein resides in the cytoplasm. The catalysed reaction is (R)-4'-phosphopantetheine + ATP + H(+) = 3'-dephospho-CoA + diphosphate. It functions in the pathway cofactor biosynthesis; coenzyme A biosynthesis; CoA from (R)-pantothenate: step 4/5. Reversibly transfers an adenylyl group from ATP to 4'-phosphopantetheine, yielding dephospho-CoA (dPCoA) and pyrophosphate. In Nocardia farcinica (strain IFM 10152), this protein is Phosphopantetheine adenylyltransferase.